The following is a 167-amino-acid chain: Ribosome maturation factor RimM (167 aa).

The PRC barrel domain maps to 92–166 (DGVYYYRELL…EVRVELMEGL (75 aa)).

The protein belongs to the RimM family. Binds ribosomal protein uS19.

It is found in the cytoplasm. In terms of biological role, an accessory protein needed during the final step in the assembly of 30S ribosomal subunit, possibly for assembly of the head region. Essential for efficient processing of 16S rRNA. May be needed both before and after RbfA during the maturation of 16S rRNA. It has affinity for free ribosomal 30S subunits but not for 70S ribosomes. The polypeptide is Ribosome maturation factor RimM (Lactobacillus delbrueckii subsp. bulgaricus (strain ATCC 11842 / DSM 20081 / BCRC 10696 / JCM 1002 / NBRC 13953 / NCIMB 11778 / NCTC 12712 / WDCM 00102 / Lb 14)).